The sequence spans 504 residues: Anaerobic nitric oxide reductase transcription regulator NorR (504 aa).

Asp-57 is subject to 4-aspartylphosphate. Positions 187 to 416 constitute a Sigma-54 factor interaction domain; the sequence is MIGLSPGMTQ…LEHAIHRAVV (230 aa). ATP contacts are provided by residues 215-222 and 278-287; these read GETGTGKE and ADNGTLFLDE. The segment at residues 479 to 498 is a DNA-binding region (H-T-H motif); the sequence is WAACARMLETDVANLHRLAK.

Its pathway is nitrogen metabolism; nitric oxide reduction. Required for the expression of anaerobic nitric oxide (NO) reductase, acts as a transcriptional activator for at least the norVW operon. Activation also requires sigma-54. This is Anaerobic nitric oxide reductase transcription regulator NorR from Escherichia coli O9:H4 (strain HS).